We begin with the raw amino-acid sequence, 155 residues long: Putative pre-16S rRNA nuclease (155 aa).

Belongs to the YqgF nuclease family.

Its subcellular location is the cytoplasm. Functionally, could be a nuclease involved in processing of the 5'-end of pre-16S rRNA. This is Putative pre-16S rRNA nuclease from Wolbachia sp. subsp. Drosophila simulans (strain wRi).